A 564-amino-acid chain; its full sequence is Eukaryotic translation initiation factor 3 subunit L (564 aa).

N-acetylserine is present on Ser-2. The residue at position 21 (Ser-21) is a Phosphoserine. In terms of domain architecture, PCI spans 331–537; the sequence is DAIRVFANIL…IHIADTKVAR (207 aa). N6-acetyllysine occurs at positions 465 and 549.

Component of the eukaryotic translation initiation factor 3 (eIF-3) complex, which is composed of 13 subunits: EIF3A, EIF3B, EIF3C, EIF3D, EIF3E, EIF3F, EIF3G, EIF3H, EIF3I, EIF3J, EIF3K, EIF3L and EIF3M. The eIF-3 complex appears to include 3 stable modules: module A is composed of EIF3A, EIF3B, EIF3G and EIF3I; module B is composed of EIF3F, EIF3H, and EIF3M; and module C is composed of EIF3C, EIF3D, EIF3E, EIF3K and EIF3L. EIF3C of module C binds EIF3B of module A and EIF3H of module B, thereby linking the three modules. EIF3J is a labile subunit that binds to the eIF-3 complex via EIF3B. The eIF-3 complex interacts with RPS6KB1 under conditions of nutrient depletion. Mitogenic stimulation leads to binding and activation of a complex composed of MTOR and RPTOR, leading to phosphorylation and release of RPS6KB1 and binding of EIF4B to eIF-3. Interacts with RRN3.

It localises to the cytoplasm. Its function is as follows. Component of the eukaryotic translation initiation factor 3 (eIF-3) complex, which is required for several steps in the initiation of protein synthesis. The eIF-3 complex associates with the 40S ribosome and facilitates the recruitment of eIF-1, eIF-1A, eIF-2:GTP:methionyl-tRNAi and eIF-5 to form the 43S pre-initiation complex (43S PIC). The eIF-3 complex stimulates mRNA recruitment to the 43S PIC and scanning of the mRNA for AUG recognition. The eIF-3 complex is also required for disassembly and recycling of post-termination ribosomal complexes and subsequently prevents premature joining of the 40S and 60S ribosomal subunits prior to initiation. The eIF-3 complex specifically targets and initiates translation of a subset of mRNAs involved in cell proliferation, including cell cycling, differentiation and apoptosis, and uses different modes of RNA stem-loop binding to exert either translational activation or repression. (Microbial infection) In case of FCV infection, plays a role in the ribosomal termination-reinitiation event leading to the translation of VP2. The sequence is that of Eukaryotic translation initiation factor 3 subunit L from Homo sapiens (Human).